The primary structure comprises 311 residues: Formimidoylglutamase (311 aa).

Residues His130, Asp155, His157, Asp159, Cys242, and Asp244 each contribute to the Mn(2+) site.

It belongs to the arginase family. Mn(2+) serves as cofactor.

The catalysed reaction is N-formimidoyl-L-glutamate + H2O = formamide + L-glutamate. It functions in the pathway amino-acid degradation; L-histidine degradation into L-glutamate; L-glutamate from N-formimidoyl-L-glutamate (hydrolase route): step 1/1. Functionally, catalyzes the conversion of N-formimidoyl-L-glutamate to L-glutamate and formamide. The polypeptide is Formimidoylglutamase (Staphylococcus aureus (strain Mu3 / ATCC 700698)).